Here is a 363-residue protein sequence, read N- to C-terminus: 3-isopropylmalate dehydrogenase (363 aa).

Residue 78 to 91 participates in NAD(+) binding; the sequence is GKRWDHLPINERPE. Positions 99, 109, 138, and 227 each coordinate substrate. 3 residues coordinate Mg(2+): Asp227, Asp251, and Asp255. Residue 285–297 coordinates NAD(+); it reads GSAPDIAGKNTAN.

It belongs to the isocitrate and isopropylmalate dehydrogenases family. LeuB type 1 subfamily. Homodimer. It depends on Mg(2+) as a cofactor. Mn(2+) serves as cofactor.

The protein resides in the cytoplasm. It carries out the reaction (2R,3S)-3-isopropylmalate + NAD(+) = 4-methyl-2-oxopentanoate + CO2 + NADH. Its pathway is amino-acid biosynthesis; L-leucine biosynthesis; L-leucine from 3-methyl-2-oxobutanoate: step 3/4. Its function is as follows. Catalyzes the oxidation of 3-carboxy-2-hydroxy-4-methylpentanoate (3-isopropylmalate) to 3-carboxy-4-methyl-2-oxopentanoate. The product decarboxylates to 4-methyl-2 oxopentanoate. This chain is 3-isopropylmalate dehydrogenase, found in Buchnera aphidicola subsp. Uroleucon helianthicola.